The primary structure comprises 354 residues: Methionine import ATP-binding protein MetN (354 aa).

The 243-residue stretch at 8-250 folds into the ABC transporter domain; it reads LDHIDITFRQ…PKEALTQEFI (243 aa). 42–49 is an ATP binding site; it reads GYSGAGKS.

The protein belongs to the ABC transporter superfamily. Methionine importer (TC 3.A.1.24) family. In terms of assembly, the complex is composed of two ATP-binding proteins (MetN), two transmembrane proteins (MetI) and a solute-binding protein (MetQ).

The protein resides in the cell membrane. The catalysed reaction is L-methionine(out) + ATP + H2O = L-methionine(in) + ADP + phosphate + H(+). The enzyme catalyses D-methionine(out) + ATP + H2O = D-methionine(in) + ADP + phosphate + H(+). Its function is as follows. Part of the ABC transporter complex MetNIQ involved in methionine import. Responsible for energy coupling to the transport system. The polypeptide is Methionine import ATP-binding protein MetN (Streptococcus pyogenes serotype M12 (strain MGAS2096)).